Reading from the N-terminus, the 159-residue chain is RxLR effector protein 24 (159 aa).

The first 18 residues, 1 to 18 (MRFLVWVFFVGLVTFVSG), serve as a signal peptide directing secretion. The RxLR-dEER motif lies at 58 to 82 (RFLRSNANQDLTTANDDSDVKEEER). An RABA-binding domain region spans residues 109 to 159 (EKAFQHMMKQGETPTSLAKRLEIGGAAELRYEKVYEKYTAWWINYHTVAGT).

Belongs to the RxLR effector family. As to quaternary structure, interacts with potato RABA GTPases including RABA1a, RABA2a and RABA4a.

It is found in the secreted. The protein resides in the host cell membrane. The protein localises to the host endomembrane system. Effector protein that contributes to pathogen virulence. Targets members of the RABA GTPases subfamily to inhibit vesicular secretion, leading to an accumulation of secretory proteins in the endoplasmic reticulum. In Phytophthora infestans (strain T30-4) (Potato late blight agent), this protein is RxLR effector protein 24.